Here is a 390-residue protein sequence, read N- to C-terminus: Levoglucosan dehydrogenase (390 aa).

Positions 13, 14, 43, 81, 83, 86, 103, 104, 130, and 132 each coordinate NADH. Residue K104 participates in levoglucosan binding. Positions 133 and 163 each coordinate levoglucosan. NADH-binding residues include W175 and R176. Residues R176, D189, and H193 each coordinate levoglucosan. Y335 is an NADH binding site.

The protein belongs to the Gfo/Idh/MocA family. In terms of assembly, homotetramer.

The catalysed reaction is levoglucosan + NAD(+) = 3-dehydrolevoglucosan + NADH + H(+). Its function is as follows. Catalyzes the oxidation of levoglucosan (1,6-anhydro-beta-D-glucose, LG) to 3-dehydrolevoglucosan (3-keto-LG). Exhibits high substrate specificity toward levoglucosan and NAD(+) for the oxidative reaction. Exhibits weak activities (about 4% compared with that of LG) toward L-sorbose and 1,5-anhydro-D-glucitol, and activity toward D-xylose is also detectable (1.7%). Can also efficiently catalyzes the NADH-dependent reduction (reverse reaction) of 3-keto-LG. This is Levoglucosan dehydrogenase from Pseudarthrobacter phenanthrenivorans (strain DSM 18606 / JCM 16027 / LMG 23796 / Sphe3) (Arthrobacter phenanthrenivorans).